The sequence spans 342 residues: Trans-3-hydroxy-L-proline dehydratase (342 aa).

The active-site Proton acceptor is S90. Substrate contacts are provided by residues 91 to 92 (GS), D251, and 256 to 257 (GT).

This sequence belongs to the proline racemase family.

The catalysed reaction is trans-3-hydroxy-L-proline = 1-pyrroline-2-carboxylate + H2O. Catalyzes the dehydration of trans-3-hydroxy-L-proline (t3LHyp) to Delta(1)-pyrroline-2-carboxylate (Pyr2C). Is likely involved in a degradation pathway that converts t3LHyp to L-proline, which would allow P.denitrificans to grow on t3LHyp as a sole carbon source. Displays neither proline racemase activity nor 4-hydroxyproline 2-epimerase activity. This Paracoccus denitrificans (strain Pd 1222) protein is Trans-3-hydroxy-L-proline dehydratase.